The sequence spans 709 residues: Septu protein PtuA (709 aa).

Component of antiviral defense system Septu type II, composed of PtuA and PtuB. Expression of Septu type II in B.subtilis (strain BEST7003) confers resistance to phages SBSphiC and SpBeta. May be an ATPase. The chain is Septu protein PtuA from Bacillus mycoides (strain KBAB4) (Bacillus weihenstephanensis).